The chain runs to 443 residues: Phosphoglucosamine mutase (443 aa).

The Phosphoserine intermediate role is filled by Ser100. Mg(2+) contacts are provided by Ser100, Asp239, Asp241, and Asp243. Residue Ser100 is modified to Phosphoserine.

Belongs to the phosphohexose mutase family. Mg(2+) is required as a cofactor. In terms of processing, activated by phosphorylation.

The enzyme catalyses alpha-D-glucosamine 1-phosphate = D-glucosamine 6-phosphate. Functionally, catalyzes the conversion of glucosamine-6-phosphate to glucosamine-1-phosphate. In Shewanella loihica (strain ATCC BAA-1088 / PV-4), this protein is Phosphoglucosamine mutase.